The following is a 698-amino-acid chain: Gametogenetin-binding protein 2 (698 aa).

A disordered region spans residues 555–575 (CMADPGNRETSGNTTHTEFHR).

The protein localises to the cytoplasm. In terms of biological role, may be involved in spermatogenesis. This chain is Gametogenetin-binding protein 2 (GGNBP2), found in Gallus gallus (Chicken).